Consider the following 399-residue polypeptide: Probable aspartate/prephenate aminotransferase (399 aa).

The L-aspartate site is built by glycine 39, tryptophan 125, and asparagine 175. The residue at position 239 (lysine 239) is an N6-(pyridoxal phosphate)lysine. Residue arginine 375 participates in L-aspartate binding.

This sequence belongs to the class-I pyridoxal-phosphate-dependent aminotransferase family. Homodimer. It depends on pyridoxal 5'-phosphate as a cofactor.

The protein resides in the cytoplasm. It catalyses the reaction L-aspartate + 2-oxoglutarate = oxaloacetate + L-glutamate. It carries out the reaction L-arogenate + 2-oxoglutarate = prephenate + L-glutamate. Its function is as follows. Catalyzes the reversible conversion of aspartate and 2-oxoglutarate to glutamate and oxaloacetate. Can also transaminate prephenate in the presence of glutamate. The protein is Probable aspartate/prephenate aminotransferase (aatA) of Rickettsia prowazekii (strain Madrid E).